We begin with the raw amino-acid sequence, 815 residues long: Leucine--tRNA ligase (815 aa).

The 'HIGH' region motif lies at 42 to 52; sequence PYPSGRLHMGH. A 'KMSKS' region motif is present at residues 574–578; that stretch reads KMSKS. Lysine 577 is a binding site for ATP.

The protein belongs to the class-I aminoacyl-tRNA synthetase family.

Its subcellular location is the cytoplasm. It catalyses the reaction tRNA(Leu) + L-leucine + ATP = L-leucyl-tRNA(Leu) + AMP + diphosphate. The chain is Leucine--tRNA ligase from Marinomonas sp. (strain MWYL1).